Reading from the N-terminus, the 710-residue chain is Ferrioxamine receptor (710 aa).

Residues M1 to A26 form the signal peptide. Residues D28–K35 carry the TonB box motif. 30 beta stranded membrane passes run T29–G37, T65–T73, Y91–F99, Y106–F114, N137–F145, I152–Y160, S180–A188, Q194–D202, W208–T216, G259–A267, I271–G279, W293–F301, W309–Y317, F353–A361, H370–F378, Y427–Q435, W443–Y451, G476–F484, Y491–T499, E517–Y525, T531–Y539, Y555–N563, L567–I575, L579–Y587, N610–Y618, I624–Y632, Y649–R657, F671–I679, Y684–S692, and V702–F710. In terms of domain architecture, TBDR plug spans P61–K174. Positions E181–F710 constitute a TBDR beta-barrel domain. The TonB C-terminal box signature appears at Y693–F710.

This sequence belongs to the TonB-dependent receptor family.

It localises to the cell outer membrane. Functionally, ferrioxamine binding and uptake, in association with the TonB protein. This chain is Ferrioxamine receptor (foxA), found in Yersinia enterocolitica.